The primary structure comprises 276 residues: Membrane protein insertase YidC 2 (276 aa).

An N-terminal signal peptide occupies residues 1-22 (MGVKKKLKLTSLLGLSLLIMTA). Cys-23 carries the N-palmitoyl cysteine lipid modification. The S-diacylglycerol cysteine moiety is linked to residue Cys-23. Helical transmembrane passes span 58-78 (ISIGVGIILFTVLIRTVLLPV), 130-150 (SDSLWPILIQMPVILALFQAL), 169-189 (VDTTLVLPILAAVFTFLSTWL), and 207-227 (GIPVLIFIFAVYAPGGVALYW).

It belongs to the OXA1/ALB3/YidC family. Type 2 subfamily. In terms of assembly, interacts with KhpB (also called EloR/Jag).

The protein resides in the cell membrane. Functionally, required for the insertion and/or proper folding and/or complex formation of integral membrane proteins into the membrane. Involved in integration of membrane proteins that insert both dependently and independently of the Sec translocase complex, as well as at least some lipoproteins. The chain is Membrane protein insertase YidC 2 from Streptococcus pneumoniae (strain ATCC BAA-255 / R6).